Here is a 145-residue protein sequence, read N- to C-terminus: uncharacterized protein (145 aa).

This is an uncharacterized protein from Rhizobium radiobacter (Agrobacterium tumefaciens).